We begin with the raw amino-acid sequence, 105 residues long: Large ribosomal subunit protein uL24 (105 aa).

Belongs to the universal ribosomal protein uL24 family. Part of the 50S ribosomal subunit.

Its function is as follows. One of two assembly initiator proteins, it binds directly to the 5'-end of the 23S rRNA, where it nucleates assembly of the 50S subunit. Functionally, one of the proteins that surrounds the polypeptide exit tunnel on the outside of the subunit. The polypeptide is Large ribosomal subunit protein uL24 (Leptothrix cholodnii (strain ATCC 51168 / LMG 8142 / SP-6) (Leptothrix discophora (strain SP-6))).